Consider the following 824-residue polypeptide: Dapper 1-B (824 aa).

Disordered regions lie at residues 1–33, 131–150, and 515–534; these read MKPIPAAPEPLGQHQDSPRRKDKGEAESERQRT, EEHLETDSRPSSGFYELSDG, and HASSSFDERPPLDFKSEGSS. The tract at residues 2-343 is interaction with tcf7l1-A; that stretch reads KPIPAAPEPL…PVRTNKPRTS (342 aa). The segment covering 16-33 has biased composition (basic and acidic residues); that stretch reads DSPRRKDKGEAESERQRT. The stretch at 84-139 forms a coiled coil; the sequence is EEKFLEDNILLLKKQLNCLRKRDAGLLSQLHELDKQINDLRIDVEKTEEHLETDSR. The segment covering 520–530 has biased composition (basic and acidic residues); sequence FDERPPLDFKS. A PDZ-binding motif is present at residues 821–824; it reads MTTV.

This sequence belongs to the dapper family. Interacts with dbf4 and tcf7l1-A. Interacts with dvl2/dsh; the interaction is required for dact1-b phosphorylation by CaMK1D and seems to become disrupted by the phosphorylation. Post-translationally, phosphorylated by CaMK1D; the phosphorylation requires binding to dvl2/dsh. In terms of tissue distribution, expressed both in the dorsal lip in early gastrula and throughout the posterior presumptive ectoderm in early neurula. Expressed in the dorsal neural folds at the tailbud stage and highly expressed in the tadpole head, including the brain, retina and cartilaginous branchial arch derivatives.

The protein resides in the cytoplasm. It localises to the nucleus. In terms of biological role, involved in regulation of intracellular signaling pathways during development. Specifically thought to play a role in canonical and/or non-canonical Wnt signaling pathways through interaction with DSH (Dishevelled) family proteins. Binds to dvl2 to regulate the degradation of beta-catenin (ctnnb1-A and possibly ctnnb1-B), thereby modulating the transcriptional activation of target genes of the Wnt signaling pathway. Seems to promote beta-catenin degradation if not phosphorylated and to block beta-catenin degradation if phosphorylated by CaMK1D. Involved in regulation of catenin delta/ctnnd1 protein level. May also bind to and directly stimulate the activity of tcf7l1-A. Also regulates the activation by dvl2 of jnk, a component of ctnnb1/beta-catenin-independent frizzled signaling. Required for notochord and head formation. This chain is Dapper 1-B (dact1-b), found in Xenopus laevis (African clawed frog).